Reading from the N-terminus, the 883-residue chain is HTH-type transcriptional regulator AlkS (883 aa).

In terms of domain architecture, HTH luxR-type spans 816–881 (ENKAGDFLTL…QAIIEAERQG (66 aa)). Residues 840–859 (NKQIATKMYVTEDAIKWHMR) constitute a DNA-binding region (H-T-H motif).

It functions in the pathway hydrocarbon metabolism; alkane degradation. In terms of biological role, may act as a transcriptional regulator of AlkB. This Pseudomonas putida (Arthrobacter siderocapsulatus) protein is HTH-type transcriptional regulator AlkS (alkS).